The sequence spans 521 residues: Bifunctional purine biosynthesis protein PurH (521 aa).

Residues 1–145 (MIKQALISVS…KNHRDVTVVV (145 aa)) form the MGS-like domain.

This sequence belongs to the PurH family.

The catalysed reaction is (6R)-10-formyltetrahydrofolate + 5-amino-1-(5-phospho-beta-D-ribosyl)imidazole-4-carboxamide = 5-formamido-1-(5-phospho-D-ribosyl)imidazole-4-carboxamide + (6S)-5,6,7,8-tetrahydrofolate. The enzyme catalyses IMP + H2O = 5-formamido-1-(5-phospho-D-ribosyl)imidazole-4-carboxamide. The protein operates within purine metabolism; IMP biosynthesis via de novo pathway; 5-formamido-1-(5-phospho-D-ribosyl)imidazole-4-carboxamide from 5-amino-1-(5-phospho-D-ribosyl)imidazole-4-carboxamide (10-formyl THF route): step 1/1. Its pathway is purine metabolism; IMP biosynthesis via de novo pathway; IMP from 5-formamido-1-(5-phospho-D-ribosyl)imidazole-4-carboxamide: step 1/1. This is Bifunctional purine biosynthesis protein PurH from Burkholderia vietnamiensis (strain G4 / LMG 22486) (Burkholderia cepacia (strain R1808)).